The chain runs to 174 residues: Gamma-crystallin C (174 aa).

Beta/gamma crystallin 'Greek key' domains are found at residues glycine 2–serine 40 and glycine 41–serine 83. Residue cysteine 23 is modified to S-methylcysteine. The connecting peptide stretch occupies residues aspartate 84 to serine 87. Beta/gamma crystallin 'Greek key' domains are found at residues histidine 88–glutamate 128 and glycine 129–valine 171.

Belongs to the beta/gamma-crystallin family.

Crystallins are the dominant structural components of the vertebrate eye lens. This is Gamma-crystallin C (CRYGC) from Bos taurus (Bovine).